The following is a 386-amino-acid chain: Branched-chain-amino-acid aminotransferase, cytosolic (386 aa).

Position 1 is an N-acetylmethionine (methionine 1). Lysine 222 carries the post-translational modification N6-(pyridoxal phosphate)lysine.

It belongs to the class-IV pyridoxal-phosphate-dependent aminotransferase family. As to quaternary structure, homodimer. It depends on pyridoxal 5'-phosphate as a cofactor. In terms of tissue distribution, expressed in brain and kidney. Overexpressed in MYC-induced brain tumors, lymphomas, as well as in a teratocarcinoma cell line.

It is found in the cytoplasm. The enzyme catalyses L-leucine + 2-oxoglutarate = 4-methyl-2-oxopentanoate + L-glutamate. It carries out the reaction L-isoleucine + 2-oxoglutarate = (S)-3-methyl-2-oxopentanoate + L-glutamate. It catalyses the reaction L-valine + 2-oxoglutarate = 3-methyl-2-oxobutanoate + L-glutamate. In terms of biological role, catalyzes the first reaction in the catabolism of the essential branched chain amino acids leucine, isoleucine, and valine. This is Branched-chain-amino-acid aminotransferase, cytosolic (Bcat1) from Mus musculus (Mouse).